The following is a 309-amino-acid chain: MKKDFLSILDIGEYELESIVADAVRLKRLKSAGTAHEFLRGKSLGMIFEKASTRTRVSFEVGMSDLGGHALFLNPQDMQLGRGEEIRDTARVLARYVDAVMIRAYSHAAIEEFARYANVPVVNGLSDRLHPCQVLADIMTLSERFGDLHGLKLAWVGDGNNVCNSWLLSSALTGMEIAVASPPRYRPRDEIVDQARAAGGKVTVVTDPDEAVRDADVLYTDIWVSMGDEQERAERLQALKGYTIDSRLLAQASPDALVMHCLPAHRGEEITDEVMEGPQSIVWDQAENRLHAQKALLVRLIAGGMASVD.

Carbamoyl phosphate-binding positions include 52–55 (STRT), Gln79, Arg103, and 130–133 (HPCQ). L-ornithine-binding positions include Asn161, Asp221, and 225–226 (SM). Carbamoyl phosphate is bound by residues 261-262 (CL) and Arg289.

This sequence belongs to the aspartate/ornithine carbamoyltransferase superfamily. OTCase family.

The protein localises to the cytoplasm. The enzyme catalyses carbamoyl phosphate + L-ornithine = L-citrulline + phosphate + H(+). It participates in amino-acid biosynthesis; L-arginine biosynthesis; L-arginine from L-ornithine and carbamoyl phosphate: step 1/3. In terms of biological role, reversibly catalyzes the transfer of the carbamoyl group from carbamoyl phosphate (CP) to the N(epsilon) atom of ornithine (ORN) to produce L-citrulline. This Methanoculleus marisnigri (strain ATCC 35101 / DSM 1498 / JR1) protein is Ornithine carbamoyltransferase.